A 456-amino-acid chain; its full sequence is RUN domain-containing protein 3B (456 aa).

Positions 1 to 24 (MASRSLGGLSGIRGGGGGGGKKSL) are disordered. The segment covering 8–21 (GLSGIRGGGGGGGK) has biased composition (gly residues). Arg-13 carries the post-translational modification Omega-N-methylarginine. An RUN domain is found at 57–189 (DDSSPEFNNF…IDFSFCLKGE (133 aa)). Residues Ser-215 and Ser-216 each carry the phosphoserine modification. A disordered region spans residues 216-237 (SDEEELRTLGSSGSESSTPENV). Positions 224–235 (LGSSGSESSTPE) are enriched in polar residues. Residues 300 to 325 (AHKLEKEQLEYIIVELQDQLTVLKNN) adopt a coiled-coil conformation. Positions 382–405 (SLSQTSLDPGQSQEGDGKQDTLNV) are enriched in polar residues. The tract at residues 382–411 (SLSQTSLDPGQSQEGDGKQDTLNVMSEGKE) is disordered.

It belongs to the RUNDC3 family. Interacts with RAP2A.

This is RUN domain-containing protein 3B (RUNDC3B) from Pongo abelii (Sumatran orangutan).